Reading from the N-terminus, the 495-residue chain is Cysteine-rich secretory protein LCCL domain-containing 2 (495 aa).

The N-terminal stretch at 1 to 22 (MSCLLNNMVLMGLALLVCGVQA) is a signal peptide. N-linked (GlcNAc...) asparagine glycosylation occurs at N27. In terms of domain architecture, SCP spans 60-200 (LMLHNKLRGQ…ENAVYLVCNY (141 aa)). 2 LCCL domains span residues 282–377 (MTQV…SSSF) and 383–486 (TETA…QNGN). Intrachain disulfides connect C288–C306, C310–C330, C389–C411, and C415–C438.

Binds to heparin, dermatan sulfate and chondroitin sulfate. As to expression, present in kidney renal tubules (at protein level).

The protein localises to the secreted. Functionally, promotes matrix assembly. The polypeptide is Cysteine-rich secretory protein LCCL domain-containing 2 (Crispld2) (Mus musculus (Mouse)).